A 132-amino-acid chain; its full sequence is UPF0292 protein PH1700 (132 aa).

The 81-residue stretch at 20-100 (EGAIIVEGAR…KVDTETRREL (81 aa)) folds into the Toprim domain. Positions 26, 69, and 71 each coordinate Mg(2+).

Belongs to the UPF0292 family. Mg(2+) is required as a cofactor.

The chain is UPF0292 protein PH1700 from Pyrococcus horikoshii (strain ATCC 700860 / DSM 12428 / JCM 9974 / NBRC 100139 / OT-3).